A 259-amino-acid chain; its full sequence is 4-hydroxy-tetrahydrodipicolinate reductase (259 aa).

NAD(+) is bound by residues 9 to 14 (GAGGRM) and E35. An NADP(+)-binding site is contributed by R36. NAD(+) is bound by residues 92–94 (GTT) and 116–119 (APNM). H149 acts as the Proton donor/acceptor in catalysis. H150 provides a ligand contact to (S)-2,3,4,5-tetrahydrodipicolinate. The active-site Proton donor is the K153. 159-160 (GT) lines the (S)-2,3,4,5-tetrahydrodipicolinate pocket.

This sequence belongs to the DapB family.

The protein resides in the cytoplasm. It catalyses the reaction (S)-2,3,4,5-tetrahydrodipicolinate + NAD(+) + H2O = (2S,4S)-4-hydroxy-2,3,4,5-tetrahydrodipicolinate + NADH + H(+). The enzyme catalyses (S)-2,3,4,5-tetrahydrodipicolinate + NADP(+) + H2O = (2S,4S)-4-hydroxy-2,3,4,5-tetrahydrodipicolinate + NADPH + H(+). Its pathway is amino-acid biosynthesis; L-lysine biosynthesis via DAP pathway; (S)-tetrahydrodipicolinate from L-aspartate: step 4/4. Its function is as follows. Catalyzes the conversion of 4-hydroxy-tetrahydrodipicolinate (HTPA) to tetrahydrodipicolinate. The polypeptide is 4-hydroxy-tetrahydrodipicolinate reductase (Oleidesulfovibrio alaskensis (strain ATCC BAA-1058 / DSM 17464 / G20) (Desulfovibrio alaskensis)).